Consider the following 244-residue polypeptide: Mitochondrial inner membrane protease atp23 (244 aa).

The interval 1–22 (MASTDDNKPPTASDFAKDAEPQ) is disordered. A divalent metal cation is bound at residue His-144. Glu-145 is a catalytic residue. His-148 serves as a coordination point for a divalent metal cation.

Belongs to the peptidase M76 family.

It localises to the mitochondrion inner membrane. Its function is as follows. Has a dual role in the assembly of mitochondrial ATPase. Acts as a protease that removes N-terminal residues of mitochondrial ATPase CF(0) subunit 6 at the intermembrane space side. Also involved in the correct assembly of the membrane-embedded ATPase CF(0) particle, probably mediating association of subunit 6 with the subunit 9 ring. The chain is Mitochondrial inner membrane protease atp23 (atp23) from Sclerotinia sclerotiorum (strain ATCC 18683 / 1980 / Ss-1) (White mold).